A 1221-amino-acid polypeptide reads, in one-letter code: MLNGHVVNYGQHRTRRSFSRIKEILPLPNLTDVQTESYKWFLDEGVKEVFDDILPISDTSGRLTLEYVDYKLQEPKYTVDESRKHDATYSAPMHVTLKLTNHETGEIKTQDVFFGDLPLMTKSGSFIVNGAERVIVSQLVRSPGVYYSGEFDKNGRQIFGTTVIPNRGAWLEFETDAKNISYVRVDRTRKLPLSVLVRALGFGSDSEIKEIFGDSDTLDLTLDKDVHKNPADSRVAEALKDIYDRLRPGEPKTTDSSRSLLVSRFFDPRRYDLAAVGRYKVNKKLSLKNRLLGYTLAETLADPDTGEVLAAKGTVVNNEVMDVLKDYLDRDDFKTVTYTPSDEGVIPEPVTVQEIKVFSREIPDREIKLISNGHIAEDVKCITPADIIASVNYFLELQEGVGNIDDIDHLGNRRIRRVGELLQNQMRIGLARMERVVRERMSIQDAATVTPQQLINIRPIVGSIKEFFGSSQLSQFMDQNNPLGELTHKRRMSALGPGGLSRDRAGYEVRDVHYTHYGRLCPIETPEGPNIGLINSMATYAIINKYGFLETPYRRVSWATHKVTDKIDYLTADEEDNYIIAGANTPLNEDGSFVDDVILCRHREDNVEVSPDRIDYIDVIPKQVVSVTSACIPFLENDDSNRALMGANHQRQAVPLINPHGPLVATGMEYRAGHDSGDALLAEADGEVEYVDANEIRVRREDQTLDTYTLEKYRRSNATKNYNQTPNVKRGDKVVDGQVIANGPSMADGELALGQNPVIAFTTWNMYNFEDAIMLSERLVKEDVYTSIHIEDYDSEARDTKLGPEEITREIPNVGEDALKDLDENGIIRIGAEVHDGDILVGKVTPKGITELSAEERLLHAIFGEKAREVRDTSLRVPHGGGGVVQDVQVFTREAGDELAPGVNTLVRVYIVQKRKIQVGDKMSGRHGNKGTVALIAPVEDMPYLPDGTPVDICLNPMGVPSRMNIGQLLEIHLGRAARALGIHVATPVFDGASEDDVWDFVREAGVDSDGKTVLYDGRTGEPFHNRVSVGVMYYLKLTHMVDDKIHARSIGPYSLVTQQPLGGKAQFGGQRFGEMEVWALEAYGAAYTLQEILTYKSDDVVGRVKAYEAIVKGERITKPGVPESFRVLVKELQSLGLDLRVLDSDENEVELRDMDEDSNEHVNIDALSRLAEAQEKKKLAEEEAEIAAEAEAEGSAEEDAAEADADANEAETADDDKASK.

Residues 1176–1221 are disordered; that stretch reads EKKKLAEEEAEIAAEAEAEGSAEEDAAEADADANEAETADDDKASK. Over residues 1183–1215 the composition is skewed to acidic residues; the sequence is EEAEIAAEAEAEGSAEEDAAEADADANEAETAD.

Belongs to the RNA polymerase beta chain family. As to quaternary structure, the RNAP catalytic core consists of 2 alpha, 1 beta, 1 beta' and 1 omega subunit. When a sigma factor is associated with the core the holoenzyme is formed, which can initiate transcription.

The catalysed reaction is RNA(n) + a ribonucleoside 5'-triphosphate = RNA(n+1) + diphosphate. In terms of biological role, DNA-dependent RNA polymerase catalyzes the transcription of DNA into RNA using the four ribonucleoside triphosphates as substrates. This chain is DNA-directed RNA polymerase subunit beta, found in Lactobacillus delbrueckii subsp. bulgaricus (strain ATCC BAA-365 / Lb-18).